The sequence spans 120 residues: ATP-dependent Clp protease adapter protein ClpS (120 aa).

This sequence belongs to the ClpS family. As to quaternary structure, binds to the N-terminal domain of the chaperone ClpA.

Its function is as follows. Involved in the modulation of the specificity of the ClpAP-mediated ATP-dependent protein degradation. The polypeptide is ATP-dependent Clp protease adapter protein ClpS (Pseudomonas fluorescens (strain ATCC BAA-477 / NRRL B-23932 / Pf-5)).